We begin with the raw amino-acid sequence, 131 residues long: Profilin-2 (131 aa).

The cysteines at positions 13 and 115 are disulfide-linked. The Involved in PIP2 interaction signature appears at 81–97; it reads AVIRGKKGAGGITIKKT. At Thr111 the chain carries Phosphothreonine.

The protein belongs to the profilin family. As to quaternary structure, occurs in many kinds of cells as a complex with monomeric actin in a 1:1 ratio. Post-translationally, phosphorylated by MAP kinases.

It localises to the cytoplasm. Its subcellular location is the cytoskeleton. In terms of biological role, binds to actin and affects the structure of the cytoskeleton. At high concentrations, profilin prevents the polymerization of actin, whereas it enhances it at low concentrations. By binding to PIP2, it inhibits the formation of IP3 and DG. The chain is Profilin-2 (PRO2) from Phleum pratense (Common timothy).